The following is a 21-amino-acid chain: Large ribosomal subunit protein uL30 (21 aa).

Residues 1-15 (AKTENKTVTVRQTAS) show a composition bias toward polar residues. A disordered region spans residues 1–21 (AKTENKTVTVRQTASPIXXXK).

This sequence belongs to the universal ribosomal protein uL30 family. As to quaternary structure, part of the 50S ribosomal subunit.

This Brevundimonas diminuta (Pseudomonas diminuta) protein is Large ribosomal subunit protein uL30 (rpmD).